Consider the following 523-residue polypeptide: Peptide chain release factor 3 (523 aa).

In terms of domain architecture, tr-type G spans 8–275 (KKRRTFAIIS…TFLEYAPEPH (268 aa)). GTP-binding positions include 17-24 (SHPDAGKT), 85-89 (DTPGH), and 139-142 (NKLD).

The protein belongs to the TRAFAC class translation factor GTPase superfamily. Classic translation factor GTPase family. PrfC subfamily.

The protein localises to the cytoplasm. Its function is as follows. Increases the formation of ribosomal termination complexes and stimulates activities of RF-1 and RF-2. It binds guanine nucleotides and has strong preference for UGA stop codons. It may interact directly with the ribosome. The stimulation of RF-1 and RF-2 is significantly reduced by GTP and GDP, but not by GMP. This chain is Peptide chain release factor 3, found in Lactococcus lactis subsp. cremoris (strain SK11).